The sequence spans 170 residues: Small ribosomal subunit protein uS13m (170 aa).

Residues 130 to 170 (LKKKPTNRKERRIFNKIKKLQDKHNKQQQKNKKSKKWKTKK) are disordered. 2 stretches are compositionally biased toward basic residues: residues 132 to 147 (KKPT…NKIK) and 155 to 170 (KQQQ…KTKK).

This sequence belongs to the universal ribosomal protein uS13 family. Part of the small ribosomal subunit.

The protein localises to the mitochondrion. In terms of biological role, located at the top of the head of the small subunit, it contacts several helices of the small subunit rRNA. The polypeptide is Small ribosomal subunit protein uS13m (mrps13) (Dictyostelium citrinum (Slime mold)).